The primary structure comprises 310 residues: tRNA dimethylallyltransferase (310 aa).

ATP is bound at residue 10 to 17 (GPTAVGKS). 12–17 (TAVGKS) lines the substrate pocket. The segment at 35-38 (DSMQ) is interaction with substrate tRNA.

Belongs to the IPP transferase family. Monomer. Requires Mg(2+) as cofactor.

It catalyses the reaction adenosine(37) in tRNA + dimethylallyl diphosphate = N(6)-dimethylallyladenosine(37) in tRNA + diphosphate. In terms of biological role, catalyzes the transfer of a dimethylallyl group onto the adenine at position 37 in tRNAs that read codons beginning with uridine, leading to the formation of N6-(dimethylallyl)adenosine (i(6)A). In Clostridium perfringens (strain SM101 / Type A), this protein is tRNA dimethylallyltransferase.